The sequence spans 362 residues: Peptide chain release factor 1 (362 aa).

Gln236 is subject to N5-methylglutamine.

It belongs to the prokaryotic/mitochondrial release factor family. Post-translationally, methylated by PrmC. Methylation increases the termination efficiency of RF1.

It localises to the cytoplasm. Its function is as follows. Peptide chain release factor 1 directs the termination of translation in response to the peptide chain termination codons UAG and UAA. The protein is Peptide chain release factor 1 of Lactobacillus helveticus (strain DPC 4571).